A 257-amino-acid chain; its full sequence is Thiazole synthase (257 aa).

Lysine 96 serves as the catalytic Schiff-base intermediate with DXP. Residues glycine 157, 184-185 (AG), and 206-207 (NT) each bind 1-deoxy-D-xylulose 5-phosphate.

Belongs to the ThiG family. Homotetramer. Forms heterodimers with either ThiH or ThiS.

The protein resides in the cytoplasm. The enzyme catalyses [ThiS sulfur-carrier protein]-C-terminal-Gly-aminoethanethioate + 2-iminoacetate + 1-deoxy-D-xylulose 5-phosphate = [ThiS sulfur-carrier protein]-C-terminal Gly-Gly + 2-[(2R,5Z)-2-carboxy-4-methylthiazol-5(2H)-ylidene]ethyl phosphate + 2 H2O + H(+). It participates in cofactor biosynthesis; thiamine diphosphate biosynthesis. In terms of biological role, catalyzes the rearrangement of 1-deoxy-D-xylulose 5-phosphate (DXP) to produce the thiazole phosphate moiety of thiamine. Sulfur is provided by the thiocarboxylate moiety of the carrier protein ThiS. In vitro, sulfur can be provided by H(2)S. This is Thiazole synthase from Rhizobium etli (strain ATCC 51251 / DSM 11541 / JCM 21823 / NBRC 15573 / CFN 42).